Here is a 333-residue protein sequence, read N- to C-terminus: Type II secretion system protein K (333 aa).

Positions 1-7 (MRRGQNG) are cleaved as a propeptide — leader sequence. Residues 8–29 (VALITVLLVVAVVTIVCAGLII) traverse the membrane as a helical segment. The Periplasmic segment spans residues 30-333 (RQQLAIRSSA…GGDDWKKDER (304 aa)). The interval 313–333 (MGQGGLPIPSTGGDDWKKDER) is disordered.

It belongs to the GSP K family. As to quaternary structure, type II secretion is composed of four main components: the outer membrane complex, the inner membrane complex, the cytoplasmic secretion ATPase and the periplasm-spanning pseudopilus. Interacts with the tip of the type II pseudopilus subunits XcpV, XcpU and XcpW. Interacts with core component XcpT. Post-translationally, cleaved by prepilin peptidase.

The protein localises to the cell inner membrane. Component of the type II secretion system required for the energy-dependent secretion of extracellular factors such as proteases and toxins from the periplasm. Plays a role in pseudopilus assembly and seems to control its length. Interacts with the pseudopilus tip complex that is critical for the recognition and binding of secretion substrates. Type II pseudopilus confers increased bacterial adhesive capabilities. This chain is Type II secretion system protein K (xcpX), found in Pseudomonas aeruginosa (strain ATCC 15692 / DSM 22644 / CIP 104116 / JCM 14847 / LMG 12228 / 1C / PRS 101 / PAO1).